We begin with the raw amino-acid sequence, 332 residues long: MTPETHVDMINASEKAPKERAYVTFLAGNGDYVKGVVGLAKGLRKVKSAYPLVVAMLPDVPEEHREILRSQGCIVREIEPVHPPDSQDAYARAYYIINYSKLRIWNFEEYNKMIYLDADIQVFGNIDDLFDMQDGYLHGVLSCFCEKIWSYTPLYSIGYCQYCPEKVVWPAEMESAPPSPYFNAGMFVFEPNPLTYESLLQTLQVTPPTPFAEQDFLNMFFGKVFKPVSPVYNLILSVLWRHPGKVDLESVKVVHYCPPGSKPWRYTGEEPNMDREDVKMLIKKWWDIYNDESLDFKPKSPADLEATVLESTIIASVTEAPLSYSPAAPSAA.

Lys101 is an active-site residue. Positions 117, 119, and 255 each coordinate Mn(2+).

Belongs to the glycosyltransferase 8 family. Galactosyltransferase subfamily. A divalent metal cation is required as a cofactor.

The protein localises to the cytoplasm. The enzyme catalyses myo-inositol + UDP-alpha-D-galactose = alpha-D-galactosyl-(1-&gt;3)-1D-myo-inositol + UDP + H(+). In terms of biological role, galactinol synthase involved in the biosynthesis of raffinose family oligosaccharides (RFOs) that function as osmoprotectants. May promote plant stress tolerance. The chain is Galactinol synthase 7 (GOLS7) from Arabidopsis thaliana (Mouse-ear cress).